The primary structure comprises 318 residues: NADH-ubiquinone oxidoreductase chain 1 (318 aa).

Transmembrane regions (helical) follow at residues 2–22, 68–88, 100–120, 146–166, 171–191, 231–251, 253–273, and 294–314; these read PMAN…FLML, ITLY…LWTP, LGLL…LWSG, LAII…STLI, HLWL…STLA, IIMM…DALS, ELYT…FLWI, and LPLT…ISSI.

This sequence belongs to the complex I subunit 1 family. In terms of assembly, core subunit of respiratory chain NADH dehydrogenase (Complex I) which is composed of 45 different subunits.

Its subcellular location is the mitochondrion inner membrane. The enzyme catalyses a ubiquinone + NADH + 5 H(+)(in) = a ubiquinol + NAD(+) + 4 H(+)(out). Its function is as follows. Core subunit of the mitochondrial membrane respiratory chain NADH dehydrogenase (Complex I) which catalyzes electron transfer from NADH through the respiratory chain, using ubiquinone as an electron acceptor. Essential for the catalytic activity and assembly of complex I. This Homo sapiens (Human) protein is NADH-ubiquinone oxidoreductase chain 1 (MT-ND1).